A 221-amino-acid polypeptide reads, in one-letter code: Phosphoribosylformylglycinamidine synthase subunit PurQ (221 aa).

The 219-residue stretch at 3–221 (AAVLVFPGSN…MFASLMQVMA (219 aa)) folds into the Glutamine amidotransferase type-1 domain. The Nucleophile role is filled by Cys-87. Residues His-195 and Glu-197 contribute to the active site.

Part of the FGAM synthase complex composed of 1 PurL, 1 PurQ and 2 PurS subunits.

The protein localises to the cytoplasm. The catalysed reaction is N(2)-formyl-N(1)-(5-phospho-beta-D-ribosyl)glycinamide + L-glutamine + ATP + H2O = 2-formamido-N(1)-(5-O-phospho-beta-D-ribosyl)acetamidine + L-glutamate + ADP + phosphate + H(+). The enzyme catalyses L-glutamine + H2O = L-glutamate + NH4(+). Its pathway is purine metabolism; IMP biosynthesis via de novo pathway; 5-amino-1-(5-phospho-D-ribosyl)imidazole from N(2)-formyl-N(1)-(5-phospho-D-ribosyl)glycinamide: step 1/2. Functionally, part of the phosphoribosylformylglycinamidine synthase complex involved in the purines biosynthetic pathway. Catalyzes the ATP-dependent conversion of formylglycinamide ribonucleotide (FGAR) and glutamine to yield formylglycinamidine ribonucleotide (FGAM) and glutamate. The FGAM synthase complex is composed of three subunits. PurQ produces an ammonia molecule by converting glutamine to glutamate. PurL transfers the ammonia molecule to FGAR to form FGAM in an ATP-dependent manner. PurS interacts with PurQ and PurL and is thought to assist in the transfer of the ammonia molecule from PurQ to PurL. This Zymomonas mobilis subsp. mobilis (strain ATCC 31821 / ZM4 / CP4) protein is Phosphoribosylformylglycinamidine synthase subunit PurQ.